We begin with the raw amino-acid sequence, 444 residues long: Na(+)-translocating NADH-quinone reductase subunit A (444 aa).

The protein belongs to the NqrA family. Composed of six subunits; NqrA, NqrB, NqrC, NqrD, NqrE and NqrF.

The catalysed reaction is a ubiquinone + n Na(+)(in) + NADH + H(+) = a ubiquinol + n Na(+)(out) + NAD(+). In terms of biological role, NQR complex catalyzes the reduction of ubiquinone-1 to ubiquinol by two successive reactions, coupled with the transport of Na(+) ions from the cytoplasm to the periplasm. NqrA to NqrE are probably involved in the second step, the conversion of ubisemiquinone to ubiquinol. The polypeptide is Na(+)-translocating NADH-quinone reductase subunit A (Shewanella amazonensis (strain ATCC BAA-1098 / SB2B)).